A 115-amino-acid polypeptide reads, in one-letter code: NADH-ubiquinone oxidoreductase chain 3 (115 aa).

The next 3 membrane-spanning stretches (helical) occupy residues 3-23 (LMLTLFTNATLASLLILIAFW), 55-75 (FFLVAITFLLFDLEIALLLPL), and 87-107 (VLFMALALITLLALSLAYEWI).

Belongs to the complex I subunit 3 family. In terms of assembly, core subunit of respiratory chain NADH dehydrogenase (Complex I) which is composed of 45 different subunits. Interacts with TMEM186. Interacts with TMEM242.

The protein resides in the mitochondrion inner membrane. It catalyses the reaction a ubiquinone + NADH + 5 H(+)(in) = a ubiquinol + NAD(+) + 4 H(+)(out). Core subunit of the mitochondrial membrane respiratory chain NADH dehydrogenase (Complex I) which catalyzes electron transfer from NADH through the respiratory chain, using ubiquinone as an electron acceptor. Essential for the catalytic activity of complex I. This is NADH-ubiquinone oxidoreductase chain 3 from Dugong dugon (Dugong).